Consider the following 240-residue polypeptide: Uridylate kinase (240 aa).

Position 12-15 (12-15 (KLSG)) interacts with ATP. The tract at residues 20-25 (GEKGFG) is involved in allosteric activation by GTP. Gly54 contacts UMP. ATP-binding residues include Gly55 and Arg59. UMP contacts are provided by residues Asp74 and 135–142 (TGSPYFST). ATP contacts are provided by Asn163, Tyr169, and Asp172.

It belongs to the UMP kinase family. Homohexamer.

It is found in the cytoplasm. It catalyses the reaction UMP + ATP = UDP + ADP. Its pathway is pyrimidine metabolism; CTP biosynthesis via de novo pathway; UDP from UMP (UMPK route): step 1/1. With respect to regulation, allosterically activated by GTP. Inhibited by UTP. Catalyzes the reversible phosphorylation of UMP to UDP. This Limosilactobacillus reuteri (Lactobacillus reuteri) protein is Uridylate kinase.